Consider the following 303-residue polypeptide: N-acetyl-D-glucosamine kinase (303 aa).

Residues 4–11 (GFDIGGSK) and 133–140 (GVGGGLIV) each bind ATP. Zn(2+)-binding residues include H157, C177, C179, and C184.

It belongs to the ROK (NagC/XylR) family. NagK subfamily.

It carries out the reaction N-acetyl-D-glucosamine + ATP = N-acetyl-D-glucosamine 6-phosphate + ADP + H(+). Its pathway is cell wall biogenesis; peptidoglycan recycling. In terms of biological role, catalyzes the phosphorylation of N-acetyl-D-glucosamine (GlcNAc) derived from cell-wall degradation, yielding GlcNAc-6-P. This Erwinia tasmaniensis (strain DSM 17950 / CFBP 7177 / CIP 109463 / NCPPB 4357 / Et1/99) protein is N-acetyl-D-glucosamine kinase.